Consider the following 273-residue polypeptide: Shikimate dehydrogenase (NADP(+)) (273 aa).

Shikimate-binding positions include 15–17 (SKS) and Thr-62. Lys-66 (proton acceptor) is an active-site residue. Residue Asp-78 participates in NADP(+) binding. Asn-87 and Asp-103 together coordinate shikimate. NADP(+)-binding positions include 127–131 (GAGGA), 150–155 (NRTYAR), and Met-214. A shikimate-binding site is contributed by Tyr-216. NADP(+) is bound at residue Gly-238.

The protein belongs to the shikimate dehydrogenase family. As to quaternary structure, homodimer.

The catalysed reaction is shikimate + NADP(+) = 3-dehydroshikimate + NADPH + H(+). Its pathway is metabolic intermediate biosynthesis; chorismate biosynthesis; chorismate from D-erythrose 4-phosphate and phosphoenolpyruvate: step 4/7. In terms of biological role, involved in the biosynthesis of the chorismate, which leads to the biosynthesis of aromatic amino acids. Catalyzes the reversible NADPH linked reduction of 3-dehydroshikimate (DHSA) to yield shikimate (SA). The chain is Shikimate dehydrogenase (NADP(+)) from Yersinia enterocolitica serotype O:8 / biotype 1B (strain NCTC 13174 / 8081).